The following is a 179-amino-acid chain: Large ribosomal subunit protein uL5 (179 aa).

It belongs to the universal ribosomal protein uL5 family. Part of the 50S ribosomal subunit; part of the 5S rRNA/L5/L18/L25 subcomplex. Contacts the 5S rRNA and the P site tRNA. Forms a bridge to the 30S subunit in the 70S ribosome.

In terms of biological role, this is one of the proteins that bind and probably mediate the attachment of the 5S RNA into the large ribosomal subunit, where it forms part of the central protuberance. In the 70S ribosome it contacts protein S13 of the 30S subunit (bridge B1b), connecting the 2 subunits; this bridge is implicated in subunit movement. Contacts the P site tRNA; the 5S rRNA and some of its associated proteins might help stabilize positioning of ribosome-bound tRNAs. The sequence is that of Large ribosomal subunit protein uL5 from Desulfatibacillum aliphaticivorans.